A 416-amino-acid polypeptide reads, in one-letter code: Major royal jelly protein 8 (416 aa).

The N-terminal stretch at 1–16 (MIRWLLLMYLGITCQG) is a signal peptide. N-linked (GlcNAc...) asparagine glycosylation is found at N24, N58, N93, N115, N158, N175, N196, and N215.

This sequence belongs to the major royal jelly protein family. Expressed at very low levels in the hypopharyngeal glands of worker honey bees (at protein level). Secreted into bee venom in the sting apparatus (at protein level). Expressed in the spermatheca of adult queen bees (at protein level); expression levels are higher in mated queens than in virgin queens. Along with Mrjp9 expressed at very low levels in the head of worker bees compared to other major royal jelly proteins.

It localises to the secreted. Functionally, component of bee sting venom. Component of royal jelly, a substance produced in the hypopharyngeal gland containing proteins, free amino acids, fatty acids, sugars and other nutrients, which is fed to developing larvae by worker nurse bees; may be present only at trace levels. All larvae are fed some royal jelly (also known as worker jelly) early in their development but it forms the principal source of nutrition for larvae destined to become queen bees. Produced in the spermatheca of adult queen bees, along with other major royal jelly proteins, where it may act as a nutrient supply for sperm stored by mated queens, or be involved in energy metabolism. This Apis mellifera (Honeybee) protein is Major royal jelly protein 8.